We begin with the raw amino-acid sequence, 379 residues long: Homoserine O-succinyltransferase (379 aa).

Residues 51-360 form the AB hydrolase-1 domain; sequence NAVLICHALS…DSPYGHDAFL (310 aa). Ser-157 (nucleophile) is an active-site residue. Arg-227 is a substrate binding site. Catalysis depends on residues Asp-323 and His-356. A substrate-binding site is contributed by Asp-357.

This sequence belongs to the AB hydrolase superfamily. MetX family. As to quaternary structure, homodimer.

It localises to the cytoplasm. It catalyses the reaction L-homoserine + succinyl-CoA = O-succinyl-L-homoserine + CoA. It participates in amino-acid biosynthesis; L-methionine biosynthesis via de novo pathway; O-succinyl-L-homoserine from L-homoserine: step 1/1. With respect to regulation, requires MetW for activity. In terms of biological role, transfers a succinyl group from succinyl-CoA to L-homoserine, forming succinyl-L-homoserine. This Pseudomonas putida (strain ATCC 47054 / DSM 6125 / CFBP 8728 / NCIMB 11950 / KT2440) protein is Homoserine O-succinyltransferase.